The primary structure comprises 599 residues: MEQQSENVYFSGSESESLSDSESRAQPQNQNSDNSRSASLTPPDSSDLEDYVDSDSETSSSLVNAPKRIKIIRSPSTSNWPRRLTSDDNGSDDDSEDEDESNDEQDLVESEEEDQRSRSSSRSAMDISSEEDSGDDEPSFTLTELPGDVPDFKVYNRNIAIFSIKYLNQFGRLNAGIQETDFPTAKLVNTNRHVVVWINMLENDTTPVTPDSFDSFNLSGAIILKDSSGLIEYMYVHKNSRTVKSLLLDAIATIYNQVTGNDILINIWTQNINIDEDVRFLVNYGFVEPAIVGKNTIQMKYHPKIPHQQTLNEIRRLLGYSKRNVGWINVFLPKDLAIKLFSYVNNYDVEFGGYLPLTSVQKPNGAWVLGWDDTLVSKGESLSVYIPPPQEHQKLEETIIGFHTHPIALSSSNTISDGMVILPPSNIDLKGISNQWLFPRPNIAHFICSPEGLWVVSLTEEFQSLLMGLRDLGEVAWPCINMILFVIFESMFQQHDQKFNYPTVTPITKWFELTDVQDLIKNLTLKRCFNYLNIPMEKFEATCQTISGYQNVRLYDISYNKWESFSALPDEGLYFTFYYKYDDFTGYPRQKSLTTEASN.

A compositionally biased stretch (polar residues) spans methionine 1 to phenylalanine 10. Positions methionine 1–proline 146 are disordered. A compositionally biased stretch (low complexity) spans serine 11–aspartate 20. The segment covering arginine 24–aspartate 44 has biased composition (polar residues). 2 stretches are compositionally biased toward acidic residues: residues serine 46 to serine 56 and asparagine 89 to aspartate 114. Over residues arginine 118 to isoleucine 127 the composition is skewed to low complexity. The span at serine 128 to proline 138 shows a compositional bias: acidic residues.

The protein belongs to the IIV-6 229L family.

This is an uncharacterized protein from Aedes vexans (Inland floodwater mosquito).